Here is a 276-residue protein sequence, read N- to C-terminus: NAD-capped RNA hydrolase NudC (276 aa).

Position 82 (R82) interacts with substrate. Residues C112 and C115 each contribute to the Zn(2+) site. Residue E125 participates in substrate binding. Residues C130 and C133 each contribute to the Zn(2+) site. Y138 is a substrate binding site. The Nudix hydrolase domain occupies 139 to 262; that stretch reads PRISPSMIVL…SIARYLIDLY (124 aa). Residues A172, E188, and E192 each coordinate a divalent metal cation. The Nudix box motif lies at 173–194; that stretch reads GFAEPGESAEDCLVREVREEVA. 206–213 is a binding site for substrate; it reads QCWPFPHS. E233 contributes to the a divalent metal cation binding site. A255 lines the substrate pocket.

Belongs to the Nudix hydrolase family. NudC subfamily. In terms of assembly, homodimer. The cofactor is Mg(2+). It depends on Mn(2+) as a cofactor. Zn(2+) is required as a cofactor.

The catalysed reaction is a 5'-end NAD(+)-phospho-ribonucleoside in mRNA + H2O = a 5'-end phospho-adenosine-phospho-ribonucleoside in mRNA + beta-nicotinamide D-ribonucleotide + 2 H(+). The enzyme catalyses NAD(+) + H2O = beta-nicotinamide D-ribonucleotide + AMP + 2 H(+). It catalyses the reaction NADH + H2O = reduced beta-nicotinamide D-ribonucleotide + AMP + 2 H(+). Functionally, mRNA decapping enzyme that specifically removes the nicotinamide adenine dinucleotide (NAD) cap from a subset of mRNAs by hydrolyzing the diphosphate linkage to produce nicotinamide mononucleotide (NMN) and 5' monophosphate mRNA. The NAD-cap is present at the 5'-end of some mRNAs and stabilizes RNA against 5'-processing. Has preference for mRNAs with a 5'-end purine. Catalyzes the hydrolysis of a broad range of dinucleotide pyrophosphates. This is NAD-capped RNA hydrolase NudC from Pseudomonas putida (strain ATCC 700007 / DSM 6899 / JCM 31910 / BCRC 17059 / LMG 24140 / F1).